Consider the following 235-residue polypeptide: Ribosomal RNA small subunit methyltransferase G (235 aa).

S-adenosyl-L-methionine-binding positions include Gly75, Phe80, 126-127 (AE), and Arg145.

It belongs to the methyltransferase superfamily. RNA methyltransferase RsmG family.

It is found in the cytoplasm. Functionally, specifically methylates the N7 position of a guanine in 16S rRNA. This Carboxydothermus hydrogenoformans (strain ATCC BAA-161 / DSM 6008 / Z-2901) protein is Ribosomal RNA small subunit methyltransferase G.